Reading from the N-terminus, the 745-residue chain is Phosphoribosylformylglycinamidine synthase subunit PurL (745 aa).

Residue His-47 is part of the active site. ATP contacts are provided by Tyr-50 and Lys-90. Mg(2+) is bound at residue Glu-92. Substrate-binding positions include 93–96 (SHNH) and Arg-115. His-94 functions as the Proton acceptor in the catalytic mechanism. Asp-116 contributes to the Mg(2+) binding site. Gln-240 contacts substrate. A Mg(2+)-binding site is contributed by Asp-268. Substrate is bound at residue 312–314 (ESQ). Positions 501 and 538 each coordinate ATP. Asn-539 lines the Mg(2+) pocket. Ser-541 serves as a coordination point for substrate.

Belongs to the FGAMS family. In terms of assembly, monomer. Part of the FGAM synthase complex composed of 1 PurL, 1 PurQ and 2 PurS subunits.

The protein resides in the cytoplasm. It carries out the reaction N(2)-formyl-N(1)-(5-phospho-beta-D-ribosyl)glycinamide + L-glutamine + ATP + H2O = 2-formamido-N(1)-(5-O-phospho-beta-D-ribosyl)acetamidine + L-glutamate + ADP + phosphate + H(+). The protein operates within purine metabolism; IMP biosynthesis via de novo pathway; 5-amino-1-(5-phospho-D-ribosyl)imidazole from N(2)-formyl-N(1)-(5-phospho-D-ribosyl)glycinamide: step 1/2. In terms of biological role, part of the phosphoribosylformylglycinamidine synthase complex involved in the purines biosynthetic pathway. Catalyzes the ATP-dependent conversion of formylglycinamide ribonucleotide (FGAR) and glutamine to yield formylglycinamidine ribonucleotide (FGAM) and glutamate. The FGAM synthase complex is composed of three subunits. PurQ produces an ammonia molecule by converting glutamine to glutamate. PurL transfers the ammonia molecule to FGAR to form FGAM in an ATP-dependent manner. PurS interacts with PurQ and PurL and is thought to assist in the transfer of the ammonia molecule from PurQ to PurL. The protein is Phosphoribosylformylglycinamidine synthase subunit PurL of Leptospira interrogans serogroup Icterohaemorrhagiae serovar Lai (strain 56601).